A 305-amino-acid chain; its full sequence is Nitrogen assimilation regulatory protein nac (305 aa).

The region spanning Met-1–Thr-58 is the HTH lysR-type domain. The H-T-H motif DNA-binding region spans Leu-18–Ala-37.

This sequence belongs to the LysR transcriptional regulatory family.

Transcriptional activator for the hut, put and ure operons and repressor for the gdh and gltB operons in response to nitrogen limitation. Negative regulator of its own expression. The chain is Nitrogen assimilation regulatory protein nac (nac) from Klebsiella aerogenes (Enterobacter aerogenes).